Reading from the N-terminus, the 317-residue chain is NADPH-dependent D-xylose reductase (317 aa).

The active-site Proton donor is the Tyr-47. His-109 is a binding site for substrate. Residues 164-165 (SN), 213-222 (SSFGPQSFVE), and 269-279 (KSNNPDRLLSN) each bind NADP(+).

Belongs to the aldo/keto reductase family.

It carries out the reaction xylitol + NAD(+) = D-xylose + NADH + H(+). It catalyses the reaction xylitol + NADP(+) = D-xylose + NADPH + H(+). The protein operates within carbohydrate metabolism; D-xylose degradation. Functionally, reduces D-xylose into xylitol. Preferentially utilizes NADPH as a cosubstrate. The sequence is that of NADPH-dependent D-xylose reductase (XYL1) from Meyerozyma guilliermondii (strain ATCC 6260 / CBS 566 / DSM 6381 / JCM 1539 / NBRC 10279 / NRRL Y-324) (Yeast).